The chain runs to 76 residues: Small ribosomal subunit protein uS17 (76 aa).

It belongs to the universal ribosomal protein uS17 family. Part of the 30S ribosomal subunit.

One of the primary rRNA binding proteins, it binds specifically to the 5'-end of 16S ribosomal RNA. This Ruegeria sp. (strain TM1040) (Silicibacter sp.) protein is Small ribosomal subunit protein uS17.